A 111-amino-acid chain; its full sequence is Large ribosomal subunit protein bL21 (111 aa).

The protein belongs to the bacterial ribosomal protein bL21 family. Part of the 50S ribosomal subunit. Contacts protein L20.

This protein binds to 23S rRNA in the presence of protein L20. The protein is Large ribosomal subunit protein bL21 of Thermosynechococcus vestitus (strain NIES-2133 / IAM M-273 / BP-1).